A 747-amino-acid polypeptide reads, in one-letter code: MTLITRVLNSNLPLRLSALKTVRQLQCGYSSHAKYAEHKPIERIRNIGISAHIDSGKTTLTERILFYTGRIAEMHEVRGKDNVGATMDSMELERQRGITIQSAATYTLWKDTNINIIDTPGHVDFTVEVERALRVLDGAVLVLCAVGGVQSQTLTVNRQMKRYNVPCLAFINKLDRLGSNPYRVLSQMRSKLNHNAAFIQLPIGVESNCKGIVDLVQERAIYFEGEHGMDLRLDEIPQDMRVESQERRQELIEHLSNADETLGELFLEEKPFTEADIKAALRRTCIKRTFTPVLVGTALKNKGVQPLLDAIIDYLPNPGEVENLAYIEQEGKEKQQVVLNPARDGKDPFMGLAFKLEAGRFGQLTYLRCYQGVLRKGDNIFNARTNKKVRIARLVRLHSNQMEDVNEVYAGDIFALFGVDCASGDTFTTNPKNHMAMESIFVPEPVVSMAIKPNNTKDRDNFSKAIARFTKEDPTFHFYFDNDVKETLVSGMGELHLEIYAQRMEREYGCPVTLGKPKVAFRETLVGPCEFDYLHKKQSGGSGQYARIIGLMEPLPPNQNTLLEFVDETVGTNVPKQFVPGVEKGFREMSERGMLSGHKLSGVRFRLQDGGHHIVDSSELAFMLAAHGAIKEVFQNGSWQILEPIMLVEVTAPEEFQGAVMGHLSKRHGIITGTEGTEGWFTVYAEVPLNDMFGYASELRSSTQGKGEFTMEYSRYSPCLPEVQEQVVRQYQESQGLGQPEKKKKKN.

Residues 1–32 (MTLITRVLNSNLPLRLSALKTVRQLQCGYSSH) constitute a mitochondrion transit peptide. The 278-residue stretch at 42 to 319 (ERIRNIGISA…AIIDYLPNPG (278 aa)) folds into the tr-type G domain. Residues 51–58 (AHIDSGKT), 118–122 (DTPGH), and 172–175 (NKLD) each bind GTP.

The protein belongs to the TRAFAC class translation factor GTPase superfamily. Classic translation factor GTPase family. EF-G/EF-2 subfamily.

The protein resides in the mitochondrion. The protein operates within protein biosynthesis; polypeptide chain elongation. Functionally, mitochondrial GTPase that catalyzes the GTP-dependent ribosomal translocation step during translation elongation. During this step, the ribosome changes from the pre-translocational (PRE) to the post-translocational (POST) state as the newly formed A-site-bound peptidyl-tRNA and P-site-bound deacylated tRNA move to the P and E sites, respectively. Catalyzes the coordinated movement of the two tRNA molecules, the mRNA and conformational changes in the ribosome. Essential during development as it acts as a retrograde signal from mitochondria to the nucleus to slow down cell proliferation if mitochondrial energy output is low. This Drosophila virilis (Fruit fly) protein is Elongation factor G, mitochondrial.